The chain runs to 265 residues: MARVFESDSGSGCSNVLSLDLIRESLIRQEDTIVFSLIERAKFPLNSPAFEESRCLDSGSFSSLTEFFVRETEIIQAKVGRYEYPEENPFFLENIPHSVFPTHKYPSALHPKALSVNINKQIWDIYFKELLPLFVKPGDDGNYPSTAASDLACLQALSRRIHYGKFVAEVKFRDAPQDYEPAIRAQDREALMKLLTFEKVEEMVKKRVQKKAETFGQEVKFNSGYGDESKKKYKVDPLLASRIYGEWLIPLTKLVEVEYLLRRLD.

The Chorismate mutase domain maps to 10-265; it reads GSGCSNVLSL…EVEYLLRRLD (256 aa).

As to quaternary structure, homodimer. As to expression, expressed in roots, stems, cauline leaves and flowers, and at lower levels in rosette leaves and siliques.

The protein localises to the cytoplasm. It is found in the cytosol. The enzyme catalyses chorismate = prephenate. Its pathway is metabolic intermediate biosynthesis; prephenate biosynthesis; prephenate from chorismate: step 1/1. No allosteric regulation. The chain is Chorismate mutase 2 from Arabidopsis thaliana (Mouse-ear cress).